Reading from the N-terminus, the 220-residue chain is 7-cyano-7-deazaguanine synthase (220 aa).

10–20 lines the ATP pocket; it reads FSGGQDSTTCL. Zn(2+) contacts are provided by Cys-186, Cys-195, Cys-198, and Cys-201.

The protein belongs to the QueC family. In terms of assembly, homodimer. Zn(2+) serves as cofactor.

It carries out the reaction 7-carboxy-7-deazaguanine + NH4(+) + ATP = 7-cyano-7-deazaguanine + ADP + phosphate + H2O + H(+). The protein operates within purine metabolism; 7-cyano-7-deazaguanine biosynthesis. Functionally, catalyzes the ATP-dependent conversion of 7-carboxy-7-deazaguanine (CDG) to 7-cyano-7-deazaguanine (preQ(0)). The polypeptide is 7-cyano-7-deazaguanine synthase (Bacillus mycoides (strain KBAB4) (Bacillus weihenstephanensis)).